We begin with the raw amino-acid sequence, 319 residues long: Ferrochelatase (319 aa).

2 residues coordinate Fe cation: H193 and E274.

The protein belongs to the ferrochelatase family.

Its subcellular location is the cytoplasm. It catalyses the reaction heme b + 2 H(+) = protoporphyrin IX + Fe(2+). Its pathway is porphyrin-containing compound metabolism; protoheme biosynthesis; protoheme from protoporphyrin-IX: step 1/1. Functionally, catalyzes the ferrous insertion into protoporphyrin IX. This is Ferrochelatase from Actinobacillus pleuropneumoniae serotype 5b (strain L20).